The following is a 703-amino-acid chain: Elongation factor G 1 (703 aa).

One can recognise a tr-type G domain in the interval 8-291 (ERYRNIGISA…AVIDYLPSPV (284 aa)). GTP is bound by residues 17-24 (AHIDAGKT), 88-92 (DTPGH), and 142-145 (NKMD).

This sequence belongs to the TRAFAC class translation factor GTPase superfamily. Classic translation factor GTPase family. EF-G/EF-2 subfamily.

Its subcellular location is the cytoplasm. Catalyzes the GTP-dependent ribosomal translocation step during translation elongation. During this step, the ribosome changes from the pre-translocational (PRE) to the post-translocational (POST) state as the newly formed A-site-bound peptidyl-tRNA and P-site-bound deacylated tRNA move to the P and E sites, respectively. Catalyzes the coordinated movement of the two tRNA molecules, the mRNA and conformational changes in the ribosome. This Burkholderia orbicola (strain AU 1054) protein is Elongation factor G 1.